A 195-amino-acid chain; its full sequence is ALK and LTK ligand 2b (195 aa).

2 disulfides stabilise this stretch: C156/C192 and C170/C179.

The protein belongs to the ALKAL family. Homodimer. Highly expressed in the swim bladder and single cells of unknown identity in the head.

The protein resides in the secreted. It is found in the cell membrane. Cytokine that acts as a physiological ligand for receptor tyrosine kinases LTK and ALK. Required for neural crest cell differentiation and iridophore development during embryonic iridophore development and adult stripe development by acting as a receptor for LTK. Also required for iridophore formation in the adult eye. The protein is ALK and LTK ligand 2b of Danio rerio (Zebrafish).